A 233-amino-acid polypeptide reads, in one-letter code: Cysteine-rich venom protein LIO1 (233 aa).

A signal peptide spans 1–18 (MIVFILLSFAAVLQQSFG). The SCP domain occupies 37–165 (VDTHNSYRRS…PYNYFYVCQY (129 aa)). 7 disulfide bridges follow: Cys-74–Cys-152, Cys-91–Cys-166, Cys-147–Cys-163, Cys-185–Cys-192, Cys-188–Cys-197, Cys-210–Cys-228, and Cys-219–Cys-232. Residues 201–233 (CTSENVFTNCNDMVKESGCQDERMKSICPASCF) form the ShKT domain.

This sequence belongs to the CRISP family. Expressed by the venom gland.

The protein resides in the secreted. In terms of biological role, blocks contraction of smooth muscle elicited by high potassium-induced depolarization, but does not block caffeine-stimulated contraction. May target voltage-gated calcium channels on smooth muscle. This is Cysteine-rich venom protein LIO1 from Erythrolamprus poecilogyrus (Water snake).